Reading from the N-terminus, the 261-residue chain is Kallikrein 1-related peptidase b9 (261 aa).

The N-terminal stretch at Met-1 to Ala-18 is a signal peptide. A propeptide spans Pro-19–Arg-24 (activation peptide). The Peptidase S1 domain maps to Ile-25–Ala-258. Intrachain disulfides connect Cys-31–Cys-173, Cys-50–Cys-66, Cys-152–Cys-219, Cys-184–Cys-198, and Cys-209–Cys-234. His-65 acts as the Charge relay system in catalysis. Residue Asn-102 is glycosylated (N-linked (GlcNAc...) asparagine). The Charge relay system role is filled by Asp-120. Ser-213 acts as the Charge relay system in catalysis.

It belongs to the peptidase S1 family. Kallikrein subfamily.

It carries out the reaction Preferential cleavage of Arg-|-Xaa bonds in small molecule substrates. Highly selective action to release kallidin (lysyl-bradykinin) from kininogen involves hydrolysis of Met-|-Xaa or Leu-|-Xaa.. Its function is as follows. Glandular kallikreins cleave Met-Lys and Arg-Ser bonds in kininogen to release Lys-bradykinin. This Mus musculus (Mouse) protein is Kallikrein 1-related peptidase b9 (Klk1b9).